The chain runs to 306 residues: Homoserine kinase (306 aa).

84–94 (PAGLGLGSSGA) lines the ATP pocket.

It belongs to the GHMP kinase family. Homoserine kinase subfamily.

Its subcellular location is the cytoplasm. The catalysed reaction is L-homoserine + ATP = O-phospho-L-homoserine + ADP + H(+). It participates in amino-acid biosynthesis; L-threonine biosynthesis; L-threonine from L-aspartate: step 4/5. In terms of biological role, catalyzes the ATP-dependent phosphorylation of L-homoserine to L-homoserine phosphate. This Sulfurisphaera tokodaii (strain DSM 16993 / JCM 10545 / NBRC 100140 / 7) (Sulfolobus tokodaii) protein is Homoserine kinase.